The chain runs to 156 residues: Small ribosomal subunit protein uS7 (156 aa).

Belongs to the universal ribosomal protein uS7 family. Part of the 30S ribosomal subunit. Contacts proteins S9 and S11.

One of the primary rRNA binding proteins, it binds directly to 16S rRNA where it nucleates assembly of the head domain of the 30S subunit. Is located at the subunit interface close to the decoding center, probably blocks exit of the E-site tRNA. This Frankia casuarinae (strain DSM 45818 / CECT 9043 / HFP020203 / CcI3) protein is Small ribosomal subunit protein uS7.